Here is a 177-residue protein sequence, read N- to C-terminus: Transcriptional regulator MET31 (177 aa).

The C2H2-type zinc finger occupies 95-117 (YSCAKCQLKFSRSSDLRRHEKVH).

As to quaternary structure, interacts with MET4 and MET28.

It localises to the cytoplasm. It is found in the nucleus. Auxiliary transcriptional regulator of sulfur amino acid metabolism. Involved in the transcriptional activation of MET28. This is Transcriptional regulator MET31 (MET31) from Saccharomyces cerevisiae (strain ATCC 204508 / S288c) (Baker's yeast).